Consider the following 242-residue polypeptide: Triosephosphate isomerase (242 aa).

Substrate is bound at residue 8–10 (NWK). The active-site Electrophile is His91. Glu155 serves as the catalytic Proton acceptor. Substrate-binding residues include Gly161 and Ser192.

Belongs to the triosephosphate isomerase family. As to quaternary structure, homodimer.

Its subcellular location is the cytoplasm. The enzyme catalyses D-glyceraldehyde 3-phosphate = dihydroxyacetone phosphate. Its pathway is carbohydrate biosynthesis; gluconeogenesis. The protein operates within carbohydrate degradation; glycolysis; D-glyceraldehyde 3-phosphate from glycerone phosphate: step 1/1. In terms of biological role, involved in the gluconeogenesis. Catalyzes stereospecifically the conversion of dihydroxyacetone phosphate (DHAP) to D-glyceraldehyde-3-phosphate (G3P). This is Triosephosphate isomerase from Wolbachia pipientis wMel.